We begin with the raw amino-acid sequence, 274 residues long: MARLRLTLAYDGTDFAGWQIQAAGGGRTVQGCLEEALATLCGQPVRVHGAGRTDSGVHALAQVAHADVPEHRAGLPWGKALTALLPKDVAVTEARLVAPDFHSRFDATGKEYRYTLWTRPGHVLPWRRPYVWDVGRYGTLDVAAMEACAGLFVGEHDFAAFQNAGTDVHSTVRRVWDVSRLAGTGPDETVWRFHGEGFLKQMVRNLMGALVAVGRGKATAEDVATLLAAGDRRRAPGTAPAQGLCLHAVEYGAPGVAGLPGLGDKPAEPAGSTT.

Catalysis depends on Asp54, which acts as the Nucleophile. Position 112 (Tyr112) interacts with substrate.

Belongs to the tRNA pseudouridine synthase TruA family. Homodimer.

The catalysed reaction is uridine(38/39/40) in tRNA = pseudouridine(38/39/40) in tRNA. Formation of pseudouridine at positions 38, 39 and 40 in the anticodon stem and loop of transfer RNAs. The sequence is that of tRNA pseudouridine synthase A from Solidesulfovibrio magneticus (strain ATCC 700980 / DSM 13731 / RS-1) (Desulfovibrio magneticus).